The sequence spans 329 residues: Mitochondrial substrate carrier family protein Q (329 aa).

3 Solcar repeats span residues 18 to 115, 125 to 206, and 216 to 310; these read VEAL…LKSI, LGTI…LRAL, and LGGL…VVIH. The next 6 helical transmembrane spans lie at 21–41, 95–115, 131–151, 175–195, 221–241, and 298–318; these read LGHA…TYPF, LIGI…LKSI, LAIA…IWVV, GFGG…NPSV, VFIL…PYLL, and AFMF…LFYL.

Belongs to the mitochondrial carrier (TC 2.A.29) family.

The protein localises to the peroxisome membrane. In terms of biological role, may have transport activity. The chain is Mitochondrial substrate carrier family protein Q (mcfQ) from Dictyostelium discoideum (Social amoeba).